The following is a 551-amino-acid chain: Structure-specific endonuclease subunit MUS81 (551 aa).

The segment covering 84–93 (HRTSGGDHAP) has biased composition (basic and acidic residues). Residues 84–130 (HRTSGGDHAPDSPSGENSPAPQGRLAEVQDSSMPVPAQPKAGGSGSY) are disordered. Residues serine 95 and serine 101 each carry the phosphoserine modification. Residues 125-244 (GGSGSYWPAR…PGEETAVPGA (120 aa)) are interaction with BLM. Positions 131–230 (WPARHSGARV…GLSLLNVGIG (100 aa)) are winged helix domain (WHD); critical for endonuclease activity. The region spanning 270–372 (LLCVDIGETR…RRVYLVEEHG (103 aa)) is the ERCC4 domain. Active-site residues include aspartate 274, glutamate 277, and aspartate 307. Mg(2+) contacts are provided by aspartate 274, glutamate 277, aspartate 307, glutamate 333, and arginine 334. The helix-hairpin-helix (2HhH); involved in DNA recognition and bending stretch occupies residues 471–545 (VREVFARQLM…LSRTLSQLYC (75 aa)).

This sequence belongs to the XPF family. As to quaternary structure, part of the heterodimeric DNA structure-specific endonuclease complex MUS81-EME1. Part of the heterodimeric DNA structure-specific endonuclease complex MUS81-EME2. Interacts with BLM; may stimulate the endonuclease activity of MUS81. Interacts with SLX4/BTBD12; this interaction is direct and links the MUS81-EME1 complex to SLX4, which may coordinate the action of the structure-specific endonuclease during DNA repair. Interacts with DCLRE1B/Apollo. Interacts with RECQL5; this interaction stimulates mitotic DNA synthesis. Interacts with CHEK2. It depends on Mg(2+) as a cofactor. As to expression, widely expressed.

The protein resides in the nucleus. It localises to the nucleolus. Catalytic subunit of two functionally distinct, structure-specific, heterodimeric DNA endonucleases MUS81-EME1 and MUS81-EME2 that are involved in the maintenance of genome stability. Both endonucleases have essentially the same substrate specificity though MUS81-EME2 is more active than its MUS81-EME1 counterpart. Both cleave 3'-flaps and nicked Holliday junctions, and exhibit limited endonuclease activity with 5' flaps and nicked double-stranded DNAs. MUS81-EME2 which is active during the replication of DNA is more specifically involved in replication fork processing. Replication forks frequently encounter obstacles to their passage, including DNA base lesions, DNA interstrand cross-links, difficult-to-replicate sequences, transcription bubbles, or tightly bound proteins. One mechanism for the restart of a stalled replication fork involves nucleolytic cleavage mediated by the MUS81-EME2 endonuclease. By acting upon the stalled fork, MUS81-EME2 generates a DNA double-strand break (DSB) that can be repaired by homologous recombination, leading to the restoration of an active fork. MUS81-EME2 could also function in telomere maintenance. MUS81-EME1, on the other hand, is active later in the cell cycle and functions in the resolution of mitotic recombination intermediates including the Holliday junctions, the four-way DNA intermediates that form during homologous recombination. This chain is Structure-specific endonuclease subunit MUS81, found in Homo sapiens (Human).